Reading from the N-terminus, the 875-residue chain is DNA topoisomerase 3-beta (875 aa).

Residues 3–153 (SVLMVAEKPS…QVTYRAHFSA (151 aa)) enclose the Toprim domain. The region spanning 170–589 (NENEAKSVDA…AIKIFKLKFM (420 aa)) is the Topo IA-type catalytic domain. Residue tyrosine 332 is the O-(5'-phospho-DNA)-tyrosine intermediate of the active site. The interval 371 to 391 (QTPRKGKDAGDHPPITPMKLG) is disordered.

This sequence belongs to the type IA topoisomerase family.

The catalysed reaction is ATP-independent breakage of single-stranded DNA, followed by passage and rejoining.. Releases the supercoiling and torsional tension of DNA introduced during the DNA replication and transcription by transiently cleaving and rejoining one strand of the DNA duplex. Introduces a single-strand break via transesterification at a target site in duplex DNA. The scissile phosphodiester is attacked by the catalytic tyrosine of the enzyme, resulting in the formation of a DNA-(5'-phosphotyrosyl)-enzyme intermediate and the expulsion of a 3'-OH DNA strand. The free DNA strand than undergoes passage around the unbroken strand thus removing DNA supercoils. Finally, in the religation step, the DNA 3'-OH attacks the covalent intermediate to expel the active-site tyrosine and restore the DNA phosphodiester backbone. Weakly relaxes negative supercoils and displays a distinct preference for binding single-stranded DNA. In Drosophila melanogaster (Fruit fly), this protein is DNA topoisomerase 3-beta (Top3beta).